The chain runs to 275 residues: MPIVRAKPTSPGRRFVEKVVHPHLYKGRPFAALLESKSKTGGRNNNGRITTRHIGGGHKQHYRIIDFKRTKDNIPATVERIEYDPNRTAHIALLKYADGERRYIIAAKKQAVGDTVMSGELSPIRPGNCLPLKNIPLGTVIHNIELKIGKGAQMARAAGASVQLLGRDGIYAILRLRSGETRRVHVNCRAVIGEVSNTENNLKSLGKAGASRWRGIRPSVRGVAMNPVDHPHGGGEGRNKGRHPTSPWGQKSKGLKTRHNKRTDNMIIRRRAKKK.

A disordered region spans residues 222-275; the sequence is GVAMNPVDHPHGGGEGRNKGRHPTSPWGQKSKGLKTRHNKRTDNMIIRRRAKKK. Residues 229-239 show a composition bias toward basic and acidic residues; that stretch reads DHPHGGGEGRN.

Belongs to the universal ribosomal protein uL2 family. Part of the 50S ribosomal subunit. Forms a bridge to the 30S subunit in the 70S ribosome.

In terms of biological role, one of the primary rRNA binding proteins. Required for association of the 30S and 50S subunits to form the 70S ribosome, for tRNA binding and peptide bond formation. It has been suggested to have peptidyltransferase activity; this is somewhat controversial. Makes several contacts with the 16S rRNA in the 70S ribosome. This Psychrobacter cryohalolentis (strain ATCC BAA-1226 / DSM 17306 / VKM B-2378 / K5) protein is Large ribosomal subunit protein uL2.